We begin with the raw amino-acid sequence, 313 residues long: Short-chain dehydrogenase/reductase family 9C member 7 (313 aa).

An NADP(+)-binding site is contributed by Phe-29 to Leu-53. Residue Ser-160 coordinates substrate. Tyr-172 acts as the Proton acceptor in catalysis. Residue Ser-185 is modified to Phosphoserine.

The protein belongs to the short-chain dehydrogenases/reductases (SDR) family. Highly expressed in liver.

The protein localises to the cytoplasm. The catalysed reaction is a N-[omega-(9R,10R)-epoxy-(13R)-hydroxy-(11E)-octadecenoyloxy]acyl-beta-D-glucosyl-(1&lt;-&gt;1)-sphing-4E-enine + NAD(+) = a N-[omega-(9R,10R)-epoxy-13-oxo-(11E)-octadecenoyloxy]acyl-beta-D-glucosyl-(1&lt;-&gt;1)-sphing-4E-enine + NADH + H(+). The enzyme catalyses a N-[omega-(9R,10R)-epoxy-(13R)-hydroxy-(11E)-octadecenoyloxy]-acylsphing-4E-enine + NAD(+) = a N-[omega-(9R,10R)-epoxy-13-oxo-(11E)-octadecenoyloxy]-acylsphing-4E-enine + NADH + H(+). Its function is as follows. Plays a crucial role in the formation of the epidermal permeability barrier. Catalyzes the NAD+-dependent dehydrogenation of the linoleate 9,10-trans-epoxy-11E-13-alcohol esterified in omega-O-acylceramides (such as in N-[omega-(9R,10R)-epoxy-(13R)-hydroxy-(11E)-octadecenoyloxy]-acylsphing-4E-enine) to the corresponding 13-ketone, the reactive moiety required for binding of epidermal ceramides to proteins. Displays weak conversion of all-trans-retinal to all-trans-retinol in the presence of NADH. Has apparently no steroid dehydrogenase activity. The sequence is that of Short-chain dehydrogenase/reductase family 9C member 7 (Sdr9c7) from Mus musculus (Mouse).